Reading from the N-terminus, the 229-residue chain is Heptaprenylglyceryl phosphate synthase (229 aa).

Residues aspartate 13 and threonine 39 each contribute to the Mg(2+) site.

It belongs to the GGGP/HepGP synthase family. Homodimer. Mg(2+) serves as cofactor.

It catalyses the reaction sn-glycerol 1-phosphate + all-trans-heptaprenyl diphosphate = 3-heptaprenyl-sn-glycero-1-phosphate + diphosphate. The protein operates within membrane lipid metabolism; glycerophospholipid metabolism. In terms of biological role, prenyltransferase that catalyzes in vivo the transfer of the heptaprenyl moiety of heptaprenyl pyrophosphate (HepPP; 35 carbon atoms) to the C3 hydroxyl of sn-glycerol-1-phosphate (G1P), producing heptaprenylglyceryl phosphate (HepGP). This reaction is an ether-bond-formation step in the biosynthesis of archaea-type G1P-based membrane lipids found in Bacillales. The polypeptide is Heptaprenylglyceryl phosphate synthase (Lysinibacillus sphaericus (strain C3-41)).